The following is a 643-amino-acid chain: Probable potassium transport system protein Kup (643 aa).

The segment covering 1 to 12 (MSISSKTEDSDI) has biased composition (basic and acidic residues). The segment at 1 to 20 (MSISSKTEDSDIRSSVMTDH) is disordered. 12 consecutive transmembrane segments (helical) span residues 28-48 (LAGL…TSPL), 65-85 (AGNV…IVGL), 121-141 (WLLV…GMIT), 158-178 (PAFH…LFLF), 187-207 (GALF…LGII), 224-244 (GISF…AVFL), 268-288 (WFLL…ALLL), 301-321 (LVPS…TIIA), 358-378 (IYVP…VAWF), 384-404 (LAAA…ILFY), 415-435 (PAAL…FFGA), and 440-460 (LFHG…IMNT).

Belongs to the HAK/KUP transporter (TC 2.A.72) family.

The protein resides in the cell inner membrane. It carries out the reaction K(+)(in) + H(+)(in) = K(+)(out) + H(+)(out). Its function is as follows. Transport of potassium into the cell. Likely operates as a K(+):H(+) symporter. The protein is Probable potassium transport system protein Kup of Chlorobium luteolum (strain DSM 273 / BCRC 81028 / 2530) (Pelodictyon luteolum).